The primary structure comprises 245 residues: MKHVGSYEELASFTSVKGNLGFDTVFEAVFMIFGPRLNIAQRYVDLLANTGIERGLLGPHEANRLWDRHLLNSAVVAELLDPGDRVVDIGSGAGLPGLPLAIARPDLQVVLLEPLLRRVTFLREVVAELGLDVEVVRGRAEELWVRDRIGERDVAVSRAVAALDKLTKWSIPLLRPGGQILAIKGEHVFDEIHQHRRVMASLGAVDVMVVVCGANYLCRPVTVVLTRCGQQMRHKPARVGDRKTQ.

Residues Gly-90, Leu-95, 140–141 (AE), and Arg-158 each bind S-adenosyl-L-methionine.

This sequence belongs to the methyltransferase superfamily. RNA methyltransferase RsmG family.

It is found in the cytoplasm. Functionally, specifically methylates the N7 position of guanine in position 518 of 16S rRNA. This Mycobacterium leprae (strain TN) protein is Ribosomal RNA small subunit methyltransferase G.